A 492-amino-acid polypeptide reads, in one-letter code: MYLILSLIIFLAYVAFHKKRTNGMPPGPFPLPIIGNLHQLGKSPYKSLKSFSDKYGGLTTIFLGSVPTVLISEPNILREIIIKNNDSIIDRYISDSGLIIGGERNLLFSKGSFWIKYRKIFSSAMTNARKFNIASRIEQQAISLNNYFGTYANSKQAINPHDYIRRYSLNGVIDYSFSDSVEYESDTHHIVIRAAEIMEEILATGNPHDYLPFLKPFYTKKRNTLAMAVGQVWDYCNDAITVHRKTLDHEKPRDLLDLILMEIEKSEEKQFYDDDSLSKCLTDLIVAGHETVAITLGWMILFLSNHQDVQQKVYDELINVVGKGNLPALVHRKDTSYLNACIQETMRIRTAAPLALPRIASEDIKVGGYTIPKGTQVMMSVYGMASDERYWKDPHIFNPERWLSSNHSTENGGGGGGVVGNSSQSEVFIPFGVGPRMCVGMGVAKDELYYCASQMFMNFKWSPVNDKPIDDEGVARIALEYKEYQVVLERRK.

Residues 1–17 traverse the membrane as a helical segment; that stretch reads MYLILSLIIFLAYVAFH. C438 lines the heme pocket.

It belongs to the cytochrome P450 family. Heme serves as cofactor.

It is found in the membrane. The polypeptide is Probable cytochrome P450 516B1 (cyp516B1) (Dictyostelium discoideum (Social amoeba)).